Consider the following 592-residue polypeptide: Aspartate--tRNA(Asp/Asn) ligase (592 aa).

Glutamate 182 provides a ligand contact to L-aspartate. The aspartate stretch occupies residues 206-209; sequence QIFK. Position 228 (arginine 228) interacts with L-aspartate. Residues 228–230 and glutamine 237 contribute to the ATP site; that span reads RDE. Histidine 455 contributes to the L-aspartate binding site. Glutamate 489 serves as a coordination point for ATP. Arginine 496 provides a ligand contact to L-aspartate. 541 to 544 lines the ATP pocket; the sequence is GLDR.

It belongs to the class-II aminoacyl-tRNA synthetase family. Type 1 subfamily. Homodimer.

Its subcellular location is the cytoplasm. It carries out the reaction tRNA(Asx) + L-aspartate + ATP = L-aspartyl-tRNA(Asx) + AMP + diphosphate. In terms of biological role, aspartyl-tRNA synthetase with relaxed tRNA specificity since it is able to aspartylate not only its cognate tRNA(Asp) but also tRNA(Asn). Reaction proceeds in two steps: L-aspartate is first activated by ATP to form Asp-AMP and then transferred to the acceptor end of tRNA(Asp/Asn). The chain is Aspartate--tRNA(Asp/Asn) ligase from Thermoanaerobacter pseudethanolicus (strain ATCC 33223 / 39E) (Clostridium thermohydrosulfuricum).